A 392-amino-acid polypeptide reads, in one-letter code: uncharacterized protein (392 aa).

Belongs to the glycosyltransferase group 1 family. Glycosyltransferase 4 subfamily.

This is an uncharacterized protein from Methanocaldococcus jannaschii (strain ATCC 43067 / DSM 2661 / JAL-1 / JCM 10045 / NBRC 100440) (Methanococcus jannaschii).